The primary structure comprises 638 residues: Threonine--tRNA ligase (638 aa).

The TGS domain occupies 1–61; it reads MPIITLPDGS…NKDSKVVIIT (61 aa). The tract at residues 242–533 is catalytic; that stretch reads DHRKLGKKHS…LIEQYEAKFP (292 aa). Zn(2+) is bound by residues C333, H384, and H510.

This sequence belongs to the class-II aminoacyl-tRNA synthetase family. As to quaternary structure, homodimer. Zn(2+) serves as cofactor.

The protein localises to the cytoplasm. The catalysed reaction is tRNA(Thr) + L-threonine + ATP = L-threonyl-tRNA(Thr) + AMP + diphosphate + H(+). In terms of biological role, catalyzes the attachment of threonine to tRNA(Thr) in a two-step reaction: L-threonine is first activated by ATP to form Thr-AMP and then transferred to the acceptor end of tRNA(Thr). Also edits incorrectly charged L-seryl-tRNA(Thr). This is Threonine--tRNA ligase from Prochlorococcus marinus (strain MIT 9301).